The sequence spans 649 residues: tRNA-guanine(15) transglycosylase (649 aa).

The active-site Nucleophile is Asp-88. Positions 123 and 194 each coordinate substrate. Zn(2+) contacts are provided by Cys-280, Cys-282, and Cys-285. The PUA domain maps to 572-647; the sequence is KYRVIVDKSV…VAVNIRGGLK (76 aa).

Belongs to the archaeosine tRNA-ribosyltransferase family. The cofactor is Zn(2+).

It carries out the reaction guanosine(15) in tRNA + 7-cyano-7-deazaguanine = 7-cyano-7-carbaguanosine(15) in tRNA + guanine. It participates in tRNA modification; archaeosine-tRNA biosynthesis. Functionally, exchanges the guanine residue with 7-cyano-7-deazaguanine (preQ0) at position 15 in the dihydrouridine loop (D-loop) of archaeal tRNAs. This Methanococcus vannielii (strain ATCC 35089 / DSM 1224 / JCM 13029 / OCM 148 / SB) protein is tRNA-guanine(15) transglycosylase.